A 182-amino-acid chain; its full sequence is DOMON domain-containing protein Y73F4A.1 (182 aa).

The signal sequence occupies residues 1–18; it reads MFVLAIVFAFVFIPSSSS. One can recognise a DOMON domain in the interval 26–143; sequence ELVSMNWNVK…CLNWMVVPGG (118 aa). N-linked (GlcNAc...) asparagine glycosylation is found at Asn-47 and Asn-128.

It is found in the secreted. This Caenorhabditis elegans protein is DOMON domain-containing protein Y73F4A.1.